Consider the following 165-residue polypeptide: Protein-export protein SecB (165 aa).

Belongs to the SecB family. In terms of assembly, homotetramer, a dimer of dimers. One homotetramer interacts with 1 SecA dimer.

Its subcellular location is the cytoplasm. Functionally, one of the proteins required for the normal export of preproteins out of the cell cytoplasm. It is a molecular chaperone that binds to a subset of precursor proteins, maintaining them in a translocation-competent state. It also specifically binds to its receptor SecA. The protein is Protein-export protein SecB of Colwellia psychrerythraea (strain 34H / ATCC BAA-681) (Vibrio psychroerythus).